Reading from the N-terminus, the 145-residue chain is D-aminoacyl-tRNA deacylase (145 aa).

The Gly-cisPro motif, important for rejection of L-amino acids motif lies at Gly-137–Pro-138.

It belongs to the DTD family. In terms of assembly, homodimer.

Its subcellular location is the cytoplasm. The enzyme catalyses glycyl-tRNA(Ala) + H2O = tRNA(Ala) + glycine + H(+). It carries out the reaction a D-aminoacyl-tRNA + H2O = a tRNA + a D-alpha-amino acid + H(+). Functionally, an aminoacyl-tRNA editing enzyme that deacylates mischarged D-aminoacyl-tRNAs. Also deacylates mischarged glycyl-tRNA(Ala), protecting cells against glycine mischarging by AlaRS. Acts via tRNA-based rather than protein-based catalysis; rejects L-amino acids rather than detecting D-amino acids in the active site. By recycling D-aminoacyl-tRNA to D-amino acids and free tRNA molecules, this enzyme counteracts the toxicity associated with the formation of D-aminoacyl-tRNA entities in vivo and helps enforce protein L-homochirality. The sequence is that of D-aminoacyl-tRNA deacylase from Shigella dysenteriae serotype 1 (strain Sd197).